The sequence spans 349 residues: Holliday junction branch migration complex subunit RuvB (349 aa).

The span at 1 to 15 shows a compositional bias: basic and acidic residues; the sequence is MSDDYRETDPTRQPE. Residues 1 to 25 are disordered; it reads MSDDYRETDPTRQPEDMGEGSLRPE. Residues 1-183 are large ATPase domain (RuvB-L); the sequence is MSDDYRETDP…FGIPLRLVFY (183 aa). ATP contacts are provided by residues Leu22, Arg23, Gly64, Lys67, Thr68, Thr69, 130–132, Arg173, Tyr183, and Arg220; that span reads EDF. Thr68 contacts Mg(2+). The small ATPAse domain (RuvB-S) stretch occupies residues 184 to 254; it reads TPEELRAIVS…LADAALGRLE (71 aa). Positions 257-349 are head domain (RuvB-H); that stretch reads ERGLDAMDRR…SSLEQDDSAP (93 aa). DNA contacts are provided by Arg293, Arg312, and Arg317.

This sequence belongs to the RuvB family. As to quaternary structure, homohexamer. Forms an RuvA(8)-RuvB(12)-Holliday junction (HJ) complex. HJ DNA is sandwiched between 2 RuvA tetramers; dsDNA enters through RuvA and exits via RuvB. An RuvB hexamer assembles on each DNA strand where it exits the tetramer. Each RuvB hexamer is contacted by two RuvA subunits (via domain III) on 2 adjacent RuvB subunits; this complex drives branch migration. In the full resolvosome a probable DNA-RuvA(4)-RuvB(12)-RuvC(2) complex forms which resolves the HJ.

The protein localises to the cytoplasm. It carries out the reaction ATP + H2O = ADP + phosphate + H(+). Functionally, the RuvA-RuvB-RuvC complex processes Holliday junction (HJ) DNA during genetic recombination and DNA repair, while the RuvA-RuvB complex plays an important role in the rescue of blocked DNA replication forks via replication fork reversal (RFR). RuvA specifically binds to HJ cruciform DNA, conferring on it an open structure. The RuvB hexamer acts as an ATP-dependent pump, pulling dsDNA into and through the RuvAB complex. RuvB forms 2 homohexamers on either side of HJ DNA bound by 1 or 2 RuvA tetramers; 4 subunits per hexamer contact DNA at a time. Coordinated motions by a converter formed by DNA-disengaged RuvB subunits stimulates ATP hydrolysis and nucleotide exchange. Immobilization of the converter enables RuvB to convert the ATP-contained energy into a lever motion, pulling 2 nucleotides of DNA out of the RuvA tetramer per ATP hydrolyzed, thus driving DNA branch migration. The RuvB motors rotate together with the DNA substrate, which together with the progressing nucleotide cycle form the mechanistic basis for DNA recombination by continuous HJ branch migration. Branch migration allows RuvC to scan DNA until it finds its consensus sequence, where it cleaves and resolves cruciform DNA. The chain is Holliday junction branch migration complex subunit RuvB from Gluconobacter oxydans (strain 621H) (Gluconobacter suboxydans).